A 487-amino-acid chain; its full sequence is E3 ubiquitin-protein ligase TRIM50 (487 aa).

Residues 16-57 (CPICLEVFKEPLMLQCGHSYCKGCLVSLSCHLDAELRCPVCR) form an RING-type zinc finger. The B box-type zinc-finger motif lies at 84 to 125 (PEPKVCVHHRNPLSLFCEKDQELICGLCGLLGSHQHHPVTPV). 4 residues coordinate Zn(2+): Cys-89, His-92, Cys-111, and His-117. Coiled coils occupy residues 125–169 (VSTV…NESD) and 204–235 (LVAS…FGNE). The 200-residue stretch at 276 to 475 (DIKLTVWKRL…LPMVLPPPSG (200 aa)) folds into the B30.2/SPRY domain. At Lys-373 the chain carries N6-acetyllysine. The tract at residues 468 to 487 (MVLPPPSGPGPLSPEQPTKL) is disordered. Pro residues predominate over residues 469–481 (VLPPPSGPGPLSP).

The protein belongs to the TRIM/RBCC family. In terms of assembly, can form dimers and trimers. Interacts with several E2 ubiquitin-conjugating enzymes, including UBE2L6, UBE2E1, UBE2E3. No interaction with UBE2H. Interacts with BECN1. Interacts with SQSTM1. Interacts with NLRP3. In terms of processing, auto-ubiquitinated. Acetylated by EP300 and KAT2B. HDAC6 drives TRIM50 deacetylation. Acetylation antagonizes with TRIM50 ubiquitination.

Its subcellular location is the cytoplasm. The catalysed reaction is S-ubiquitinyl-[E2 ubiquitin-conjugating enzyme]-L-cysteine + [acceptor protein]-L-lysine = [E2 ubiquitin-conjugating enzyme]-L-cysteine + N(6)-ubiquitinyl-[acceptor protein]-L-lysine.. In terms of biological role, E3 ubiquitin-protein ligase that ubiquitinates Beclin-1/BECN1 in a 'Lys-63'-dependent manner enhancing its binding to ULK1. In turn, promotes starvation-induced autophagy activation. Also interacts with p62/SQSTM1 protein and thereby induces the formation and the autophagy clearance of aggresome-associated polyubiquitinated proteins through HDAC6 interaction. Also promotes NLRP3 inflammasome activation by directly inducing NLRP3 oligomerization independent of its E3 ligase function. In Homo sapiens (Human), this protein is E3 ubiquitin-protein ligase TRIM50.